The following is a 64-amino-acid chain: Prokaryotic ubiquitin-like protein Pup (64 aa).

The segment at 1–36 (MAQEQTKRGGGGGDDEDVTGTTAAGQERRKKLAQDT) is disordered. Residues 21–58 (TTAAGQERRKKLAQDTDDLLDEIDDVLEENAEDFVRAY) are ARC ATPase binding. The stretch at 26–52 (QERRKKLAQDTDDLLDEIDDVLEENAE) forms a coiled coil. Gln-64 bears the Deamidated glutamine mark. Gln-64 participates in a covalent cross-link: Isoglutamyl lysine isopeptide (Gln-Lys) (interchain with K-? in acceptor proteins).

This sequence belongs to the prokaryotic ubiquitin-like protein family. As to quaternary structure, strongly interacts with the proteasome-associated ATPase ARC through a hydrophobic interface; the interacting region of Pup lies in its C-terminal half. There is one Pup binding site per ARC hexamer ring. Is modified by deamidation of its C-terminal glutamine to glutamate by the deamidase Dop, a prerequisite to the subsequent pupylation process.

Its pathway is protein degradation; proteasomal Pup-dependent pathway. In terms of biological role, protein modifier that is covalently attached to lysine residues of substrate proteins, thereby targeting them for proteasomal degradation. The tagging system is termed pupylation. The chain is Prokaryotic ubiquitin-like protein Pup from Mycobacterium ulcerans (strain Agy99).